Here is a 199-residue protein sequence, read N- to C-terminus: Chaperone protein TorD (199 aa).

It belongs to the TorD/DmsD family. TorD subfamily.

The protein localises to the cytoplasm. Functionally, involved in the biogenesis of TorA. Acts on TorA before the insertion of the molybdenum cofactor and, as a result, probably favors a conformation of the apoenzyme that is competent for acquiring the cofactor. This is Chaperone protein TorD from Escherichia coli (strain ATCC 8739 / DSM 1576 / NBRC 3972 / NCIMB 8545 / WDCM 00012 / Crooks).